The following is a 383-amino-acid chain: Lipid-A-disaccharide synthase (383 aa).

The protein belongs to the LpxB family.

The enzyme catalyses 2-N,3-O-bis[(3R)-3-hydroxytetradecanoyl]-alpha-D-glucosaminyl 1-phosphate + UDP-2-N,3-O-bis[(3R)-3-hydroxytetradecanoyl]-alpha-D-glucosamine = lipid A disaccharide (E. coli) + UDP + H(+). The catalysed reaction is a lipid X + a UDP-2-N,3-O-bis[(3R)-3-hydroxyacyl]-alpha-D-glucosamine = a lipid A disaccharide + UDP + H(+). Its pathway is glycolipid biosynthesis; lipid IV(A) biosynthesis; lipid IV(A) from (3R)-3-hydroxytetradecanoyl-[acyl-carrier-protein] and UDP-N-acetyl-alpha-D-glucosamine: step 5/6. Functionally, condensation of UDP-2,3-diacylglucosamine and 2,3-diacylglucosamine-1-phosphate to form lipid A disaccharide, a precursor of lipid A, a phosphorylated glycolipid that anchors the lipopolysaccharide to the outer membrane of the cell. This Pectobacterium atrosepticum (strain SCRI 1043 / ATCC BAA-672) (Erwinia carotovora subsp. atroseptica) protein is Lipid-A-disaccharide synthase.